Reading from the N-terminus, the 336-residue chain is Dihydroorotate dehydrogenase (quinone) (336 aa).

FMN is bound by residues 62–66 (AGLDK) and T86. K66 contributes to the substrate binding site. 111–115 (NRMGF) contributes to the substrate binding site. Positions 139 and 172 each coordinate FMN. Position 172 (N172) interacts with substrate. S175 serves as the catalytic Nucleophile. Substrate is bound at residue N177. Residues K217 and T245 each contribute to the FMN site. A substrate-binding site is contributed by 246–247 (NT). FMN is bound by residues G268, G297, and 318 to 319 (YS).

The protein belongs to the dihydroorotate dehydrogenase family. Type 2 subfamily. Monomer. The cofactor is FMN.

It is found in the cell membrane. It carries out the reaction (S)-dihydroorotate + a quinone = orotate + a quinol. It participates in pyrimidine metabolism; UMP biosynthesis via de novo pathway; orotate from (S)-dihydroorotate (quinone route): step 1/1. In terms of biological role, catalyzes the conversion of dihydroorotate to orotate with quinone as electron acceptor. The polypeptide is Dihydroorotate dehydrogenase (quinone) (Salmonella choleraesuis (strain SC-B67)).